A 221-amino-acid polypeptide reads, in one-letter code: Sugar transporter SWEET1 (221 aa).

Helical transmembrane passes span 3-23 (AGGV…LGMF), 43-63 (QFLP…YGVL), 68-88 (TLII…LAYL), 102-122 (ATLL…VPDL), 129-149 (LGLF…ADLA), 160-180 (LSFS…IYGF), and 186-206 (YITV…GLFC). Residues 10–94 (FLSSACVLFT…LAYLHYSPQK (85 aa)) form the MtN3/slv 1 domain. The MtN3/slv 2 domain maps to 127–212 (QQLGLFCSVF…GLFCKYPPEQ (86 aa)). A mediates interaction with TRPV2 region spans residues 149-221 (AKIVQTKSTQ…QDRKYRLLQT (73 aa)).

The protein belongs to the SWEET sugar transporter family. As to quaternary structure, interacts with TRPV2; the interaction probably occurs intracellularly and depends on TRPV2 N-glycosylation. As to expression, expressed at high levels in lung, placenta, spleen and thymus, at intermediate levels in brain, heart, kidney and testis, and at low levels in bone marrow, liver and lymph node. Within the thymus expression is highest in non-lymphoid cells.

It is found in the golgi apparatus membrane. The protein resides in the cell membrane. Functionally, mediates sugar transport across membranes. May regulate the expression of RAG1 a gene involved in V(D)J recombination. The sequence is that of Sugar transporter SWEET1 (Slc50a1) from Mus musculus (Mouse).